We begin with the raw amino-acid sequence, 194 residues long: ATP-dependent Clp protease proteolytic subunit (194 aa).

The Nucleophile role is filled by serine 98. Histidine 123 is an active-site residue.

This sequence belongs to the peptidase S14 family. As to quaternary structure, fourteen ClpP subunits assemble into 2 heptameric rings which stack back to back to give a disk-like structure with a central cavity, resembling the structure of eukaryotic proteasomes.

The protein localises to the cytoplasm. It catalyses the reaction Hydrolysis of proteins to small peptides in the presence of ATP and magnesium. alpha-casein is the usual test substrate. In the absence of ATP, only oligopeptides shorter than five residues are hydrolyzed (such as succinyl-Leu-Tyr-|-NHMec, and Leu-Tyr-Leu-|-Tyr-Trp, in which cleavage of the -Tyr-|-Leu- and -Tyr-|-Trp bonds also occurs).. Functionally, cleaves peptides in various proteins in a process that requires ATP hydrolysis. Has a chymotrypsin-like activity. Plays a major role in the degradation of misfolded proteins. The sequence is that of ATP-dependent Clp protease proteolytic subunit from Aliarcobacter butzleri (strain RM4018) (Arcobacter butzleri).